The primary structure comprises 32 residues: Kappa-conotoxin SrXIA (32 aa).

Intrachain disulfides connect Cys-1/Cys-15, Cys-8/Cys-20, Cys-14/Cys-24, and Cys-19/Cys-28. A 4-carboxyglutamate mark is found at Glu-9 and Glu-10. Residue Pro-32 is modified to Proline amide.

It belongs to the conotoxin I2 superfamily. Expressed by the venom duct.

It is found in the secreted. In terms of biological role, kappa-conotoxins bind and inhibit voltage-gated potassium channels. This toxin inhibits Kv1.2/KCNA2 and Kv1.6/KCNA6. Produces stiffening of body, limbs and tail when injected intracranially into mice. The sequence is that of Kappa-conotoxin SrXIA from Conus spurius (Alphabet cone).